A 218-amino-acid chain; its full sequence is Probable WRKY transcription factor 12 (218 aa).

Low complexity predominate over residues 49–63 (SSLSSPSFPIHNSSS). Disordered stretches follow at residues 49-120 (SSLS…DMKN) and 199-218 (HNHIPSDDSTSPDHDCLSSF). A compositionally biased stretch (polar residues) spans 64-77 (TTTTHAPLGFSNNL). A compositionally biased stretch (low complexity) spans 105–116 (SNSWWRSNSGSG). The WRKY DNA-binding region spans 139 to 204 (SDVDVLDDGY…YEGRHNHIPS (66 aa)).

This sequence belongs to the WRKY group II-c family.

Its subcellular location is the nucleus. Transcription factor. Interacts specifically with the W box (5'-(T)TGAC[CT]-3'), a frequently occurring elicitor-responsive cis-acting element. This Arabidopsis thaliana (Mouse-ear cress) protein is Probable WRKY transcription factor 12 (WRKY12).